The following is a 233-amino-acid chain: Orotidine 5'-phosphate decarboxylase (233 aa).

Residues aspartate 13, lysine 35, 62 to 71 (DLKFHDIPNT), threonine 122, arginine 182, glutamine 191, glycine 211, and arginine 212 contribute to the substrate site. The Proton donor role is filled by lysine 64.

It belongs to the OMP decarboxylase family. Type 1 subfamily. Homodimer.

The catalysed reaction is orotidine 5'-phosphate + H(+) = UMP + CO2. The protein operates within pyrimidine metabolism; UMP biosynthesis via de novo pathway; UMP from orotate: step 2/2. In terms of biological role, catalyzes the decarboxylation of orotidine 5'-monophosphate (OMP) to uridine 5'-monophosphate (UMP). The sequence is that of Orotidine 5'-phosphate decarboxylase from Pseudomonas putida (strain ATCC 47054 / DSM 6125 / CFBP 8728 / NCIMB 11950 / KT2440).